The chain runs to 297 residues: Homoserine kinase (297 aa).

Residue 84–94 (PPARGLGSSAT) coordinates ATP.

This sequence belongs to the GHMP kinase family. Homoserine kinase subfamily.

The protein resides in the cytoplasm. The catalysed reaction is L-homoserine + ATP = O-phospho-L-homoserine + ADP + H(+). Its pathway is amino-acid biosynthesis; L-threonine biosynthesis; L-threonine from L-aspartate: step 4/5. Its function is as follows. Catalyzes the ATP-dependent phosphorylation of L-homoserine to L-homoserine phosphate. The polypeptide is Homoserine kinase (thrB) (Aquifex aeolicus (strain VF5)).